We begin with the raw amino-acid sequence, 1136 residues long: Type I inositol polyphosphate 5-phosphatase 13 (1136 aa).

WD repeat units lie at residues 147-185 (ETQT…EAGC), 205-244 (VTTS…VSHD), 259-297 (AHRG…KSLL), 436-475 (EDTR…RDVN), and 515-552 (SHNE…PLDN). Catalytic regions lie at residues 782 to 798 (DMVA…FGIT) and 861 to 876 (KKRI…YRDT). A Glycyl lysine isopeptide (Lys-Gly) (interchain with G-Cter in ubiquitin) cross-link involves residue Lys-940. Residues 1104-1136 (KNLGGSRRYPTDITRNGSTRPRTEDSVRRGKSR) form a disordered region. Over residues 1124 to 1136 (PRTEDSVRRGKSR) the composition is skewed to basic and acidic residues.

It belongs to the inositol polyphosphate 5-phosphatase family. As to quaternary structure, interacts with KIN10, but not with PHOT1. Mg(2+) serves as cofactor. In terms of tissue distribution, expressed in young seedlings and flowers. Highly expressed in anther and pollen grains, but not in pistils. Not detected in maturated roots, stems and rosette leaves.

It is found in the nucleus. The catalysed reaction is 1D-myo-inositol 1,4,5-trisphosphate + H2O = 1D-myo-inositol 1,4-bisphosphate + phosphate. Converts inositol 1,4,5-trisphosphate (Ins(1,4,5)P3) to inositol 1,4-bisphosphate. Modulates cotyledon vein development through regulating auxin homeostasis. Involved in blue light responses. Decreases the amount of KIN10 degraded by the proteasome under low nutrient conditions. Participates with IP5P12 in the control of Ins(1,4,5)P3/Ca(2+) levels that is crucial for maintaining pollen dormancy and regulating early germination of pollen. May modulate auxin transport by regulating vesicle trafficking and thereby plays a role in root gravitropism. The sequence is that of Type I inositol polyphosphate 5-phosphatase 13 from Arabidopsis thaliana (Mouse-ear cress).